The primary structure comprises 416 residues: UBX domain-containing protein 4 (416 aa).

One can recognise a UBX domain in the interval 273 to 350; the sequence is KAISECLLRV…EFGSKTMLLF (78 aa). A disordered region spans residues 376-402; it reads TRTTPSVNTINKSNPQGPSDNATSIKK. A compositionally biased stretch (polar residues) spans 378–402; it reads TTPSVNTINKSNPQGPSDNATSIKK.

Its subcellular location is the nucleus. The protein localises to the cytoplasm. Its function is as follows. Involved in CDC48-dependent protein degradation through the ubiquitin/proteasome pathway. This chain is UBX domain-containing protein 4 (UBX4), found in Saccharomyces cerevisiae (strain ATCC 204508 / S288c) (Baker's yeast).